The following is a 550-amino-acid chain: Cytochrome P450 monooxygenase FFUJ_09176 (550 aa).

A signal peptide spans 1–31; it reads MLQTIPMPSRELTIALAVLSLLMVLVQRAGS. Residues 430–441 show a composition bias toward basic and acidic residues; it reads FIPERFEGDTRS. Positions 430-451 are disordered; it reads FIPERFEGDTRSSQESAASPDV. Heme is bound at residue cysteine 466.

This sequence belongs to the cytochrome P450 family.

Its function is as follows. Cytochrome P450 monooxygenase; part of the DMATS1 gene cluster that mediates the biosynthesis of a reversely N-prenylated monomeric L-tryptophan (r-N-DMAT). Seems not to contribute to the final DMATS1 product. This Gibberella fujikuroi (strain CBS 195.34 / IMI 58289 / NRRL A-6831) (Bakanae and foot rot disease fungus) protein is Cytochrome P450 monooxygenase FFUJ_09176.